The chain runs to 353 residues: Stomatin-like protein 2, mitochondrial (353 aa).

A mitochondrion-targeting transit peptide spans 1-28 (MLARAARGTGALLLRGSVQASGRIPRRA). Ser-17 carries the phosphoserine; by PKC/PRKCZ modification. Tyr-124 carries the post-translational modification Phosphotyrosine. Lys-145 is subject to N6-acetyllysine; alternate. The residue at position 145 (Lys-145) is an N6-succinyllysine; alternate. Residues 215–252 (INVAEGKKQAQILASEAEKAEQINQAAGEASAVLAKAK) are a coiled coil. Lys-233 bears the N6-acetyllysine mark. Positions 324-353 (VPGAQNSSEARRDVQTTDTSIEELGRVKLS) are disordered. A Phosphoserine modification is found at Ser-330.

Belongs to the band 7/mec-2 family. In terms of assembly, forms homooligomers. Interacts with MFN2; may form heterooligomers. Interacts with PHB1 and PHB2; recruits them to cardiolipin-enriched mitochondrial membranes and stabilizes them. Interacts with CACNA2D2.

It is found in the cell membrane. It localises to the mitochondrion. The protein localises to the mitochondrion inner membrane. The protein resides in the mitochondrion intermembrane space. Its subcellular location is the membrane raft. It is found in the cytoplasm. It localises to the cytoskeleton. Its function is as follows. Mitochondrial protein that probably regulates the biogenesis and the activity of mitochondria. Stimulates cardiolipin biosynthesis, binds cardiolipin-enriched membranes where it recruits and stabilizes some proteins including prohibitin and may therefore act in the organization of functional microdomains in mitochondrial membranes. Through regulation of the mitochondrial function may play a role into several biological processes including cell migration, cell proliferation, T-cell activation, calcium homeostasis and cellular response to stress. May play a role in calcium homeostasis through negative regulation of calcium efflux from mitochondria. Required for mitochondrial hyperfusion a pro-survival cellular response to stress which results in increased ATP production by mitochondria. May also regulate the organization of functional domains at the plasma membrane and play a role in T-cell activation through association with the T-cell receptor signaling complex and its regulation. This chain is Stomatin-like protein 2, mitochondrial (Stoml2), found in Rattus norvegicus (Rat).